A 663-amino-acid chain; its full sequence is Alcohol oxidase 2 (663 aa).

FAD is bound at residue 8-38 (DILVLGGGSSGSCIAGRLANLDHSLKVGLIE). Catalysis depends on His567, which acts as the Proton acceptor. The short motif at 661-663 (ARF) is the Microbody targeting signal element.

Belongs to the GMC oxidoreductase family. As to quaternary structure, homooctamer. The cofactor is FAD.

Its subcellular location is the peroxisome matrix. The enzyme catalyses a primary alcohol + O2 = an aldehyde + H2O2. Its pathway is energy metabolism; methane degradation. Minor isoform of alcohol oxidase, which catalyzes the oxidation of methanol to formaldehyde and hydrogen peroxide, the first step in the methanol utilization pathway of methylotrophic yeasts. The polypeptide is Alcohol oxidase 2 (AOX2) (Komagataella phaffii (strain ATCC 76273 / CBS 7435 / CECT 11047 / NRRL Y-11430 / Wegner 21-1) (Yeast)).